The chain runs to 296 residues: MEAEKFVLITGCSEGGIGNALALKFHQEGFQVLATARQVERMDNLTKAGLQTLKLDVTDEDSVREVEQEVRKFTNGSLHYLINNAGAPCSAPAIDLDIEDVSKVMDVNFYGVIRMNKAFQHQLIRAKGTIVNVNSLVSYVPFAFNAAYNASKAALLAYSNTLRIELAPFGVQVTSIMTGGVQTKIQSKPLGTMTEAAIPENSIYYPYRKLILENRNPVEKFVTIEEFADAAYPQLVGRGRWYQLFKPGVRPAQIWAGYMSSAGRVGSMLPVEVFSMSVRLIVKLPSTAVWRDHTVD.

Isoleucine 9 is an NADP(+) binding site. Residues glycine 11 to glycine 15 carry the GXSXG motif. Residues threonine 35, arginine 41, aspartate 56, asparagine 84, lysine 117, tyrosine 148, lysine 152, valine 181, and threonine 183 each contribute to the NADP(+) site. The Proton donor role is filled by tyrosine 148. Lysine 152 acts as the Lowers pKa of active site Tyr in catalysis.

This sequence belongs to the short-chain dehydrogenases/reductases (SDR) family.

Its subcellular location is the lipid droplet. The protein resides in the cytoplasm. It is found in the vacuole. The protein localises to the endoplasmic reticulum. It localises to the golgi apparatus. Its subcellular location is the mitochondrion outer membrane. The catalysed reaction is 1-hexadecanoyl-sn-glycero-3-phosphate + NADP(+) = 1-hexadecanoylglycerone 3-phosphate + NADPH + H(+). It carries out the reaction a 1-acylglycerone 3-phosphate + NADPH + H(+) = a 1-acyl-sn-glycero-3-phosphate + NADP(+). The enzyme catalyses a triacylglycerol + H2O = a diacylglycerol + a fatty acid + H(+). Functionally, can convert acyl and alkyl dihydroxyacetone-phosphate (DHAP) into glycerolipids and ether lipids, respectively. Required for the biosynthesis of phosphatidic acid via the DHAP pathway, where it reduces 1-acyl DHAP to lysophosphatidic acid (LPA). Also has triacylglycerol (TAG) lipase activity. Involved in the mobilization of the non-polar storage lipids triacylglycerols (TAGs) from lipid particles by hydrolysis of TAGs. Lipolysis of TAG by AYR1 is essential for starvation-induced autophagy. Forms an NADPH-regulated cation-selective channel in the mitochondrial outer membrane. This is NADPH-dependent 1-acyldihydroxyacetone phosphate reductase (ayr1) from Schizosaccharomyces pombe (strain 972 / ATCC 24843) (Fission yeast).